The primary structure comprises 341 residues: MATIKDVAKRANVSTTTVSHVINKTRFVAEETRNAVWAAIKELHYSPSAVARSLKVNHTKSIGLLATSSEAAYFAEIIESVEKSCFQKGYTLILGNAWNDPEKQRAYLSMMAQKRVDGLLVMCSEYPDSVLSMLEEYRHIPMVVMDWGEAKADFTDAVIDNAFQGGYIAGRYLIERGHREIGVIPGPLERNTGAGRLAGFMQAMKEAHISVPENWIVQGDFEPESGYRAMQQILSQQHRPTAVFCGGDIMAMGAICAADEMGLRVPQDISLIGYDNVRNARYFSPALTTIHQPKDSLGEAAFNMLLDRIVNKREESQSIEVHPRLVERRSVADGPFVDYRR.

The HTH lacI-type domain occupies Ala-2 to Val-56. The segment at residues Ile-4 to Asn-23 is a DNA-binding region (H-T-H motif). The DNA-binding element occupies Ser-48–Val-56. Tyr-73, Arg-190, Thr-192, Phe-221, and Asp-275 together coordinate hypoxanthine.

In terms of assembly, homodimer.

The protein operates within purine metabolism; purine nucleotide biosynthesis [regulation]. Functionally, is the main repressor of the genes involved in the de novo synthesis of purine nucleotides, regulating purB, purC, purEK, purF, purHD, purL, purMN and guaBA expression. PurR is allosterically activated to bind its cognate DNA by binding the purine corepressors, hypoxanthine or guanine, thereby effecting transcription repression. The sequence is that of HTH-type transcriptional repressor PurR from Klebsiella pneumoniae (strain 342).